The chain runs to 176 residues: Ribosome maturation factor RimM (176 aa).

Residues 97–176 enclose the PRC barrel domain; sequence EDEFYWRDLI…QILVDWDPDF (80 aa).

It belongs to the RimM family. In terms of assembly, binds ribosomal protein uS19.

Its subcellular location is the cytoplasm. Functionally, an accessory protein needed during the final step in the assembly of 30S ribosomal subunit, possibly for assembly of the head region. Essential for efficient processing of 16S rRNA. May be needed both before and after RbfA during the maturation of 16S rRNA. It has affinity for free ribosomal 30S subunits but not for 70S ribosomes. In Shewanella oneidensis (strain ATCC 700550 / JCM 31522 / CIP 106686 / LMG 19005 / NCIMB 14063 / MR-1), this protein is Ribosome maturation factor RimM.